The following is a 615-amino-acid chain: Elongation factor 4 (615 aa).

The region spanning 14-200 (SRIRNFCIIA…KVVELIPAPS (187 aa)) is the tr-type G domain. Residues 26 to 31 (DHGKST) and 147 to 150 (NKID) contribute to the GTP site.

Belongs to the TRAFAC class translation factor GTPase superfamily. Classic translation factor GTPase family. LepA subfamily.

It is found in the cell membrane. The enzyme catalyses GTP + H2O = GDP + phosphate + H(+). Required for accurate and efficient protein synthesis under certain stress conditions. May act as a fidelity factor of the translation reaction, by catalyzing a one-codon backward translocation of tRNAs on improperly translocated ribosomes. Back-translocation proceeds from a post-translocation (POST) complex to a pre-translocation (PRE) complex, thus giving elongation factor G a second chance to translocate the tRNAs correctly. Binds to ribosomes in a GTP-dependent manner. The sequence is that of Elongation factor 4 from Corynebacterium efficiens (strain DSM 44549 / YS-314 / AJ 12310 / JCM 11189 / NBRC 100395).